Here is an 82-residue protein sequence, read N- to C-terminus: Spore coat protein T (82 aa).

Positions Met-1–Arg-19 are excised as a propeptide.

It is found in the spore coat. Functionally, inner spore coat protein which seems to play a role in germination. The sequence is that of Spore coat protein T (cotT) from Bacillus subtilis (strain 168).